A 190-amino-acid chain; its full sequence is Peptidyl-tRNA hydrolase (190 aa).

Residue Tyr19 coordinates tRNA. His24 functions as the Proton acceptor in the catalytic mechanism. The tRNA site is built by Tyr72, Asn74, and Asn121.

It belongs to the PTH family.

Its subcellular location is the mitochondrion. The enzyme catalyses an N-acyl-L-alpha-aminoacyl-tRNA + H2O = an N-acyl-L-amino acid + a tRNA + H(+). In terms of biological role, peptidyl-tRNA hydrolase involved in the recycling of tRNA-Lys from diacetyl-lysyl-tRNA-Lys and is important for mitochondrial function. This is Peptidyl-tRNA hydrolase (PTH1) from Saccharomyces cerevisiae (strain ATCC 204508 / S288c) (Baker's yeast).